A 285-amino-acid chain; its full sequence is ATP synthase gamma chain (285 aa).

The protein belongs to the ATPase gamma chain family. F-type ATPases have 2 components, CF(1) - the catalytic core - and CF(0) - the membrane proton channel. CF(1) has five subunits: alpha(3), beta(3), gamma(1), delta(1), epsilon(1). CF(0) has three main subunits: a, b and c.

It localises to the cell membrane. Its function is as follows. Produces ATP from ADP in the presence of a proton gradient across the membrane. The gamma chain is believed to be important in regulating ATPase activity and the flow of protons through the CF(0) complex. In Clostridium novyi (strain NT), this protein is ATP synthase gamma chain.